The chain runs to 308 residues: Methionyl-tRNA formyltransferase (308 aa).

Residue 109-112 (SLLP) coordinates (6S)-5,6,7,8-tetrahydrofolate.

Belongs to the Fmt family.

The catalysed reaction is L-methionyl-tRNA(fMet) + (6R)-10-formyltetrahydrofolate = N-formyl-L-methionyl-tRNA(fMet) + (6S)-5,6,7,8-tetrahydrofolate + H(+). Its function is as follows. Attaches a formyl group to the free amino group of methionyl-tRNA(fMet). The formyl group appears to play a dual role in the initiator identity of N-formylmethionyl-tRNA by promoting its recognition by IF2 and preventing the misappropriation of this tRNA by the elongation apparatus. The protein is Methionyl-tRNA formyltransferase of Salinispora arenicola (strain CNS-205).